We begin with the raw amino-acid sequence, 542 residues long: Probable spastin homolog spas-1 (542 aa).

Residues 29–66 (RAAIEMDELTKQNGTINEKLQTAELYKQARQMLKEANE) adopt a coiled-coil conformation. The disordered stretch occupies residues 131–177 (ATVPGDKKVSKVKQTEKAPHVCSRGDRCGAHQPPPEKKSTPLKPVNQ). Basic and acidic residues predominate over residues 135–169 (GDKKVSKVKQTEKAPHVCSRGDRCGAHQPPPEKKS). 309–316 (GPPGNGKT) contacts ATP.

The protein belongs to the AAA ATPase family. Spastin subfamily. Homohexamer. The homohexamer is stabilized by ATP-binding. The homohexamer may adopt a ring conformation through which microtubules pass prior to being severed. Interacts with microtubules.

It localises to the cytoplasm. It is found in the cytoskeleton. The protein resides in the perinuclear region. It carries out the reaction n ATP + n H2O + a microtubule = n ADP + n phosphate + (n+1) alpha/beta tubulin heterodimers.. In terms of biological role, severs microtubules, probably in an ATP-dependent fashion. In Caenorhabditis briggsae, this protein is Probable spastin homolog spas-1 (spas-1).